The following is a 547-amino-acid chain: MFS-type transporter M6 (547 aa).

Positions 1-45 are disordered; sequence MHRRRRDNLMTPAEMVASMKPPQSLSTEDDDGSRRDSESSADVLK. The helical transmembrane segment at 81-101 threads the bilayer; that stretch reads VLVVASFAAAISPFSTSTYYP. The N-linked (GlcNAc...) asparagine glycan is linked to Asn-118. Residues 146-166 traverse the membrane as a helical segment; sequence PMFLVCFAIYFVANVGLALQN. Asn-167 is a glycosylation site (N-linked (GlcNAc...) asparagine). The next 2 membrane-spanning stretches (helical) occupy residues 206-226 and 236-256; these read LIYA…IGGL and VFWF…IFFG. Asn-274 is a glycosylation site (N-linked (GlcNAc...) asparagine). The next 5 helical transmembrane spans lie at 317-337, 347-367, 407-427, 432-452, and 469-489; these read FILS…TSVL, YDAV…LLAY, LGFV…YGWQ, APLA…TGVM, and AVGA…VAVV. N-linked (GlcNAc...) asparagine glycosylation occurs at Asn-493. A helical transmembrane segment spans residues 496-516; sequence AGIGWTATVTAGLWVLMMPTL.

The protein belongs to the major facilitator superfamily. CAR1 family.

It is found in the membrane. Functionally, MFS-type transporter; part of the gene cluster that mediates the biosynthesis of squalestatin S1 (SQS1, also known as zaragozic acid A), a heavily oxidized fungal polyketide that offers potent cholesterol lowering activity by targeting squalene synthase (SS). The polypeptide is MFS-type transporter M6 (Phoma sp. (strain ATCC 20986 / MF5453)).